Reading from the N-terminus, the 301-residue chain is F1 operon positive regulatory protein (301 aa).

An HTH araC/xylS-type domain is found at 8–107; it reads NSIIQYIEEN…GYTPRQYRMI (100 aa). 2 consecutive DNA-binding regions (H-T-H motif) follow at residues 26 to 47 and 74 to 97; these read DCLV…KEYV and IIEI…KKIF.

Functionally, positive regulator of F1 operon expression. The protein is F1 operon positive regulatory protein (caf1R) of Yersinia pestis.